The sequence spans 176 residues: Adenine phosphoribosyltransferase (176 aa).

This sequence belongs to the purine/pyrimidine phosphoribosyltransferase family. As to quaternary structure, homodimer.

It localises to the cytoplasm. The enzyme catalyses AMP + diphosphate = 5-phospho-alpha-D-ribose 1-diphosphate + adenine. The protein operates within purine metabolism; AMP biosynthesis via salvage pathway; AMP from adenine: step 1/1. Functionally, catalyzes a salvage reaction resulting in the formation of AMP, that is energically less costly than de novo synthesis. The sequence is that of Adenine phosphoribosyltransferase from Bacteroides thetaiotaomicron (strain ATCC 29148 / DSM 2079 / JCM 5827 / CCUG 10774 / NCTC 10582 / VPI-5482 / E50).